The chain runs to 142 residues: Hemoglobin subunit alpha (142 aa).

The residue at position 1 (Ser1) is an N-acetylserine. One can recognise a Globin domain in the interval 1–142 (SLSDKDKAVV…LALALSEKYR (142 aa)). His59 contacts O2. His88 provides a ligand contact to heme b.

The protein belongs to the globin family. In terms of assembly, heterotetramer of two alpha chains and two beta chains. In terms of tissue distribution, red blood cells.

Its function is as follows. Involved in oxygen transport from gills to the various peripheral tissues. The protein is Hemoglobin subunit alpha (hba) of Carassius auratus (Goldfish).